A 281-amino-acid chain; its full sequence is MIENRPWLTIFSHTMLILGIAVILFPLYVAFVAATLDKQAVYAAPMTLIPGTHLLENIHNIWVNGVGTNSAPFWRMLLNSFVMAFSITLGKITVSMLSAFAIVWFRFPLRNLFFWMIFITLMLPVEVRIFPTVEVIANLQMLDSYAGLTLPLMASATATFLFRQFFMTLPDELVEAARIDGASPMRFFCDIVFPLSKTNLAALFVITFIYGWNQYLWPLLIITDVDLGTTVAGIKGMIATGEGTTEWNSVMVAMLLTLIPPVVIVLVMQRAFVRGLVDSEK.

Helical transmembrane passes span 16–36 (LILG…AATL), 85–105 (FSIT…IVWF), 113–133 (FFWM…FPTV), 142–162 (LDSY…TFLF), 202–222 (ALFV…LLII), and 247–267 (WNSV…IVLV). Positions 77–268 (LLNSFVMAFS…IPPVVIVLVM (192 aa)) constitute an ABC transmembrane type-1 domain.

The protein belongs to the binding-protein-dependent transport system permease family. UgpAE subfamily. As to quaternary structure, the complex is composed of two ATP-binding proteins (UgpC), two transmembrane proteins (UgpA and UgpE) and a solute-binding protein (UgpB).

The protein resides in the cell inner membrane. Part of the ABC transporter complex UgpBAEC involved in sn-glycerol-3-phosphate (G3P) import. Probably responsible for the translocation of the substrate across the membrane. Can also transport glycerophosphoryl diesters, which are hydrolyzed to G3P and alcohol during transport. The G3P moiety can be detected in the cytoplasm whereas the corresponding alcohol is usually found in the culture medium. It was proposed by Yang et al that the complex could also transport glycerol-2-phosphate (G2P) in vivo, but it was shown later by Wuttge et al that UgpB does not bind G2P, questioning this transport activity. G2P might be converted in the periplasm to G3P before its transport. The chain is sn-glycerol-3-phosphate transport system permease protein UgpE from Escherichia coli (strain K12).